Reading from the N-terminus, the 615-residue chain is Semenogelin-1 (615 aa).

The first 23 residues, 1–23 (MKPIIFLVLSLLLILEKQAAVMG), serve as a signal peptide directing secretion. At glutamine 24 the chain carries Pyrrolidone carboxylic acid. 3 disordered regions span residues 24–118 (QKGG…EHGK), 133–160 (GHAP…SQDS), and 172–585 (GKEQ…HRSY). The segment covering 34-46 (SESSQFPHGQKGQ) has biased composition (polar residues). Residues 50–80 (ARKDKQHAESKRSVSIEHTYHVDIPDHDQTR) are compositionally biased toward basic and acidic residues. Over residues 81 to 91 (TSKQYDLNAQN) the composition is skewed to polar residues. Residues 107 to 118 (FNHKQEGREHGK) are compositionally biased toward basic and acidic residues. Composition is skewed to polar residues over residues 138–160 (GTQN…SQDS), 177–196 (SVSG…SPVL), and 209–224 (TQNS…NVNE). N-linked (GlcNAc...) asparagine glycosylation is found at asparagine 148, asparagine 184, and asparagine 223. A compositionally biased stretch (basic and acidic residues) spans 241–253 (QEDRLQHGSKDVF). The segment covering 254–265 (SKNQNQTRNPNQ) has biased composition (polar residues). N-linked (GlcNAc...) asparagine glycans are attached at residues asparagine 258 and asparagine 275. The span at 283–300 (TEERRPNHGEKGIQKDAS) shows a compositional bias: basic and acidic residues. N-linked (GlcNAc...) asparagine glycosylation is present at asparagine 306. Residues 308-317 (TEDKMHDKSQ) are compositionally biased toward basic and acidic residues. An N-linked (GlcNAc...) asparagine glycan is attached at asparagine 332. The span at 341–358 (TEERRPNHGEKGIQKDAS) shows a compositional bias: basic and acidic residues. A glycan (N-linked (GlcNAc...) asparagine) is linked at asparagine 364. Basic and acidic residues predominate over residues 366–375 (TEDKMHDKSQ). Asparagine 390 is a glycosylation site (N-linked (GlcNAc...) asparagine). The segment covering 399 to 416 (TEERRPNHGEKGIQKDAS) has biased composition (basic and acidic residues). The N-linked (GlcNAc...) asparagine glycan is linked to asparagine 422. The span at 424–433 (TEDKMHDKSQ) shows a compositional bias: basic and acidic residues. The N-linked (GlcNAc...) asparagine glycan is linked to asparagine 448. Basic and acidic residues predominate over residues 457–474 (TEERRPNHGEKGIQKDAS). An N-linked (GlcNAc...) asparagine glycan is attached at asparagine 480. Basic and acidic residues predominate over residues 481–491 (KTEDKMHDKSQ). N-linked (GlcNAc...) asparagine glycosylation occurs at asparagine 506. The segment covering 515 to 532 (TEERRPNHGEKGIQKDAS) has biased composition (basic and acidic residues). N-linked (GlcNAc...) asparagine glycosylation is present at asparagine 538. Over residues 539–549 (KTEDEKHDKSQ) the composition is skewed to basic and acidic residues. Over residues 550–563 (KQVTTPSQDQQSGQ) the composition is skewed to polar residues.

The protein belongs to the semenogelin family. Occurs in disulfide-linked complexes. Post-translationally, transglutaminase substrate. Rapidly cleaved after ejaculation by KLK3/PSA, resulting in liquefaction of the semen coagulum and the progressive release of motile spermatozoa.

It localises to the secreted. Predominant protein in semen. It participates in the formation of a gel matrix entrapping the accessory gland secretions and ejaculated spermatozoa. Fragments of semenogelin and/or fragments of the related proteins may contribute to the activation of progressive sperm movements as the gel-forming proteins are fragmented by KLK3/PSA. The polypeptide is Semenogelin-1 (SEMG1) (Saguinus oedipus (Cotton-top tamarin)).